A 256-amino-acid polypeptide reads, in one-letter code: Hemin import ATP-binding protein HmuV (256 aa).

Residues 2-238 form the ABC transporter domain; the sequence is ISAQNLVYSL…QELTMLYGAD (237 aa). 34-41 provides a ligand contact to ATP; the sequence is GPNGAGKS.

It belongs to the ABC transporter superfamily. Heme (hemin) importer (TC 3.A.1.14.5) family. The complex is composed of two ATP-binding proteins (HmuV), two transmembrane proteins (HmuU) and a solute-binding protein (HmuT).

It localises to the cell inner membrane. Functionally, part of the ABC transporter complex HmuTUV involved in hemin import. Responsible for energy coupling to the transport system. This Shigella dysenteriae protein is Hemin import ATP-binding protein HmuV.